The chain runs to 336 residues: Fructose-1,6-bisphosphatase class 1 (336 aa).

4 residues coordinate Mg(2+): E92, D115, L117, and D118. Residues 118-121, N211, Y244, 262-264, and K274 contribute to the substrate site; these read DGSS and YLY. Mg(2+) is bound at residue E280.

It belongs to the FBPase class 1 family. Homotetramer. The cofactor is Mg(2+).

The protein localises to the cytoplasm. The catalysed reaction is beta-D-fructose 1,6-bisphosphate + H2O = beta-D-fructose 6-phosphate + phosphate. It participates in carbohydrate biosynthesis; gluconeogenesis. The sequence is that of Fructose-1,6-bisphosphatase class 1 from Aliivibrio salmonicida (strain LFI1238) (Vibrio salmonicida (strain LFI1238)).